The chain runs to 427 residues: MTILFLFLLLFLLMFIGVPIAVSLGLSGALTILLFSPDSVRSLAIKLFETSEHYTLLAIPFFLLSGAFMTTGGVARRLIDFANACVGHIRGGLAIAAVLACMLFAALSGSSPATVAAVGSIAIAGMVRSGYPQAFGAGIVCNAGTLGILIPPSIVMVVYAAATETSVGKLFIAGVVPGLLLGLILMVVIYIVARVKKLPAMPRVSLREWLASARKALWGLLLMVIILGGIYSGAFTPTEAAAVAAVYSAFVALFVYRDMRLSECPKVLLESGKLTIMLMFIIANAMLFAHVLTTEQIPQSIASWVTELGLSPWMFLLVVNIVLLIAGNFMEPSAIILILAPIFFPIAMELGIDPIHLGIIMVVNMEIGLITPPVGLNLFVTSAVTGMPLGATIRAALPWLMILLVFLIIVTYIPAVSLALPNWLGMS.

Helical transmembrane passes span 2–22 (TILF…PIAV), 55–75 (TLLA…GGVA), 91–111 (GGLA…SGSS), 115–135 (VAAV…PQAF), 138–158 (GIVC…VMVV), 171–191 (FIAG…VIYI), 216–236 (ALWG…GAFT), 237–257 (PTEA…FVYR), 274–294 (LTIM…VLTT), 310–330 (LSPW…GNFM), 335–355 (IILI…IDPI), 359–379 (IIMV…LNLF), and 396–416 (ALPW…IPAV).

The protein belongs to the TRAP transporter large permease family. The complex comprises the extracytoplasmic solute receptor protein DctP, and the two transmembrane proteins DctQ and DctM.

The protein resides in the cell inner membrane. Part of the tripartite ATP-independent periplasmic (TRAP) transport system DctPQM involved in C4-dicarboxylates uptake. The polypeptide is C4-dicarboxylate TRAP transporter large permease protein DctM (Pseudomonas aeruginosa (strain ATCC 15692 / DSM 22644 / CIP 104116 / JCM 14847 / LMG 12228 / 1C / PRS 101 / PAO1)).